Reading from the N-terminus, the 596-residue chain is Estrogen receptor (596 aa).

The modulating (transactivation AF-1); mediates interaction with MACROD1 stretch occupies residues 1 to 185 (MTMTLHTKAS…AMESAKETRY (185 aa)). A glycan (O-linked (GlcNAc) serine) is linked at S10. The interval 36–48 (ERPLGEVYMDSSK) is required for interaction with NCOA1. Residues 36–175 (ERPLGEVYMD…LASTSDKGSM (140 aa)) form an interaction with DDX5; self-association region. Phosphoserine; by CDK2 is present on residues S104 and S106. Residue S119 is modified to Phosphoserine. A disordered region spans residues 144–175 (EAGPPAYYRPNSDNRRQGGRERLASTSDKGSM). The segment covering 155–166 (SDNRRQGGRERL) has biased composition (basic and acidic residues). Phosphoserine; by CK2 is present on S168. NR C4-type zinc fingers lie at residues 186–206 (CAVC…CEGC) and 222–246 (CPAT…LRKC). A DNA-binding region (nuclear receptor) is located at residues 186–251 (CAVCNDYASG…RLRKCYEVGM (66 aa)). The interval 186–311 (CAVCNDYASG…TKKNSPVLSL (126 aa)) is mediates interaction with DNTTIP2. Positions 252 to 311 (MKGGIRKDRRGGRMLKHKRQRDDGEGRNEAVPSGDMRAANLWPSPIMIKHTKKNSPVLSL) are hinge. Over residues 259–270 (DRRGGRMLKHKR) the composition is skewed to basic residues. The disordered stretch occupies residues 259–285 (DRRGGRMLKHKRQRDDGEGRNEAVPSG). R261 carries the post-translational modification Asymmetric dimethylarginine; by PRMT1. Residues 263–596 (GRMLKHKRQR…GEAENFPSTV (334 aa)) are interaction with AKAP13. Positions 265 to 595 (MLKHKRQRDD…TGEAENFPST (331 aa)) are self-association. An NR LBD domain is found at 312-548 (TADQMISALL…DLLLEMLDAH (237 aa)). The segment at 312 to 595 (TADQMISALL…TGEAENFPST (284 aa)) is transactivation AF-2. 2 residues coordinate 17beta-estradiol: E354 and R395. A lipid anchor (S-palmitoyl cysteine) is attached at C448. Position 525 (H525) interacts with 17beta-estradiol. Y538 bears the Phosphotyrosine; by Tyr-kinases mark. A glycan (O-linked (GlcNAc) threonine) is linked at T572.

It belongs to the nuclear hormone receptor family. NR3 subfamily. In terms of assembly, binds DNA as a homodimer. Can form a heterodimer with ESR2. Interacts with coactivator NCOA5. Interacts with PELP1, the interaction is enhanced by 17-beta-estradiol; the interaction increases ESR1 transcriptional activity. Interacts with NCOA7; the interaction is ligand-inducible. Interacts with AKAP13, CUEDC2, HEXIM1, KDM5A, MAP1S, SMARD1, and UBE1C. Interacts with MUC1; the interaction is stimulated by 7 beta-estradiol (E2) and enhances ESR1-mediated transcription. Interacts with DNTTIP2, and UIMC1. Interacts with KMT2D/MLL2. Interacts with ATAD2; the interaction is enhanced by estradiol. Interacts with KIF18A and LDB1. Interacts with RLIM (via its C-terminus). Interacts with MACROD1. Interacts with SH2D4A and PLCG. Interacts with SH2D4A; the interaction blocks binding to PLCG and inhibits estrogen-induced cell proliferation. Interacts with DYNLL1. Interacts with CCDC62; the interaction requires estradiol and appears to enhance the transcription of target genes. Interacts with NR2C1; the interaction prevents homodimerization of ESR1 and suppresses its transcriptional activity and cell growth. Interacts with DNAAF4. Interacts with PRMT2. Interacts with RBFOX2. Interacts with EP300; the interaction is estrogen-dependent and enhanced by CITED1. Interacts with CITED1; the interaction is estrogen-dependent. Interacts with FAM120B, FOXL2, PHB2 and SLC30A9. Interacts with coactivators NCOA3 and NCOA6. Interacts with STK3/MST2 only in the presence of SAV1 and vice-versa. Binds to CSNK1D. Interacts with NCOA2; NCOA2 can interact with ESR1 AF-1 and AF-2 domains simultaneously and mediate their transcriptional synergy. Interacts with DDX5. Interacts with NCOA1; the interaction seems to require a self-association of N-terminal and C-terminal regions. Interacts with ZNF366, DDX17, NFKB1, RELA, SP1 and SP3. Interacts with NRIP1. Interacts with GPER1; the interaction occurs in an estrogen-dependent manner. Interacts with CLOCK and the interaction is stimulated by estrogen. Interacts with TRIP4 (ufmylated); estrogen dependent. Interacts with LMTK3; the interaction phosphorylates ESR1 (in vitro) and protects it against proteasomal degradation. Interacts with CCAR2 (via N-terminus) in a ligand-independent manner. Interacts with ZFHX3. Interacts with SFR1 in a ligand-dependent and -independent manner. Interacts with DCAF13, LATS1 and DCAF1; regulates ESR1 ubiquitination and ubiquitin-mediated proteasomal degradation. Interacts (via DNA-binding domain) with POU4F2 (C-terminus); this interaction increases the estrogen receptor ESR1 transcriptional activity in a DNA- and ligand 17-beta-estradiol-independent manner. Interacts with ESRRB isoform 1. Interacts with UBE3A and WBP2. Interacts with GTF2B. Interacts with RBM39. In the absence of hormonal ligand, interacts with TACC1. Interacts with PI3KR1 or PI3KR2 and PTK2/FAK1. Interacts with SRC. Interacts with BAG1; the interaction is promoted in the absence of estradiol (17-beta-estradiol/E2). Interacts with and ubiquitinated by STUB1; the interaction is promoted in the absence of estradiol (17-beta-estradiol/E2). Interacts with NEDD8. Post-translationally, glycosylated; contains N-acetylglucosamine, probably O-linked. Ubiquitinated; regulated by LATS1 via DCAF1 it leads to ESR1 proteasomal degradation. Deubiquitinated by OTUB1. Ubiquitinated by STUB1/CHIP; in the CA1 hippocampal region following loss of endogenous circulating estradiol (17-beta-estradiol/E2). Ubiquitinated by UBR5, leading to its degradation: UBR5 specifically recognizes and binds ligand-bound ESR1 when it is not associated with coactivators (NCOAs). In presence of NCOAs, the UBR5-degron is not accessible, preventing its ubiquitination and degradation. In terms of processing, phosphorylated by cyclin A/CDK2 and CK1. Phosphorylation probably enhances transcriptional activity. Dephosphorylation at Ser-119 by PPP5C inhibits its transactivation activity. Phosphorylated by LMTK3 (in vitro). Post-translationally, palmitoylated at Cys-448 by ZDHHC7 and ZDHHC21. Palmitoylation is required for plasma membrane targeting and for rapid intracellular signaling via ERK and AKT kinases and cAMP generation, but not for signaling mediated by the nuclear hormone receptor. Dimethylated by PRMT1 at Arg-261. The methylation may favor cytoplasmic localization. Demethylated by JMJD6 at Arg-261.

Its subcellular location is the nucleus. It localises to the cytoplasm. The protein localises to the golgi apparatus. It is found in the cell membrane. Nuclear hormone receptor. The steroid hormones and their receptors are involved in the regulation of eukaryotic gene expression and affect cellular proliferation and differentiation in target tissues. Ligand-dependent nuclear transactivation involves either direct homodimer binding to a palindromic estrogen response element (ERE) sequence or association with other DNA-binding transcription factors, such as AP-1/c-Jun, c-Fos, ATF-2, Sp1 and Sp3, to mediate ERE-independent signaling. Ligand binding induces a conformational change allowing subsequent or combinatorial association with multiprotein coactivator complexes through LXXLL motifs of their respective components. Mutual transrepression occurs between the estrogen receptor (ER) and NF-kappa-B in a cell-type specific manner. Decreases NF-kappa-B DNA-binding activity and inhibits NF-kappa-B-mediated transcription from the IL6 promoter and displace RELA/p65 and associated coregulators from the promoter. Recruited to the NF-kappa-B response element of the CCL2 and IL8 promoters and can displace CREBBP. Present with NF-kappa-B components RELA/p65 and NFKB1/p50 on ERE sequences. Can also act synergistically with NF-kappa-B to activate transcription involving respective recruitment adjacent response elements; the function involves CREBBP. Can activate the transcriptional activity of TFF1. Also mediates membrane-initiated estrogen signaling involving various kinase cascades. Essential for MTA1-mediated transcriptional regulation of BRCA1 and BCAS3. Maintains neuronal survival in response to ischemic reperfusion injury when in the presence of circulating estradiol (17-beta-estradiol/E2). This is Estrogen receptor (ESR1) from Bos taurus (Bovine).